Here is a 527-residue protein sequence, read N- to C-terminus: Fusicoccadiene C-8 hydroxylase (527 aa).

The chain crosses the membrane as a helical span at residues 15 to 35 (GKPLLLFLILITLTYSLGIVF). Residue N125 is glycosylated (N-linked (GlcNAc...) asparagine). C465 is a heme binding site. Residue N496 is glycosylated (N-linked (GlcNAc...) asparagine).

Belongs to the cytochrome P450 family. Requires heme as cofactor.

It localises to the membrane. Its pathway is mycotoxin biosynthesis. Functionally, cytochrome P450 monooxygenase; part of the gene cluster that mediates the biosynthesis of the diterpene glucoside brassicicene C. In the first step of the brassicicene C biosynthesis, the bifunctional diterpene synthase bsc8 that possesses both prenyl transferase and terpene cyclase activity, converts isopentenyl diphosphate and dimethylallyl diphosphate into geranylgeranyl diphosphate (GGDP) that is further converted into fusicocca-2,10(14)-diene, the first precursor for brassicicene C. Fusicocca-2,10(14)-diene is then substrate of cytochrome P450 monooxygenase bsc1 for hydroxylation at the C-8 position. Oxidation at C-16 position to aldehyde is then catalyzed by the cytochrome P450 monooyxygenase bsc7, yielding fusicocca-2,10(14)-diene-8-beta,16-diol. Follows the isomerization of the double bond and reduction of aldehyde to alcohol catalyzed by the short-chain dehydrogenase/reductase bsc3 to yield the diol compound fusicocca-1,10(14)-diene-8 beta,16-diol. The next step is the oxidation at the C-3 position of fusicocca-2,10(14)-diene-8-beta,16-diol catalyzed by the alpha-ketoglutarate dependent dioxygenase bsc9, to produce a triol compound. Methylation of the hydroxy group at position 16 is performed by the methyltransferase bsc6. 16-O-methylation is followed by oxidation at the C-13 position to ketone and an alkyl shift of the methyl group leads to brassicicene C. Although the probable acetyltransferase bsc4 is included in the gene cluster, no acetylation reactions are necessary for brassicicene C biosynthesis. However, the fact that brassicicene E, which is a structurally related compound having an acetoxy group at position 12, was previously isolated from another strain of A.brassicicola suggests that the ATCC 96836 strain might also produce a small amount of brassicicene E. This chain is Fusicoccadiene C-8 hydroxylase, found in Alternaria brassicicola (Dark leaf spot agent).